Here is a 459-residue protein sequence, read N- to C-terminus: Argininosuccinate lyase (459 aa).

Belongs to the lyase 1 family. Argininosuccinate lyase subfamily.

It localises to the cytoplasm. It catalyses the reaction 2-(N(omega)-L-arginino)succinate = fumarate + L-arginine. Its pathway is amino-acid biosynthesis; L-arginine biosynthesis; L-arginine from L-ornithine and carbamoyl phosphate: step 3/3. This is Argininosuccinate lyase from Photorhabdus laumondii subsp. laumondii (strain DSM 15139 / CIP 105565 / TT01) (Photorhabdus luminescens subsp. laumondii).